Here is a 649-residue protein sequence, read N- to C-terminus: Endoglucanase D (649 aa).

An N-terminal signal peptide occupies residues 1–41 (MSRMTLKSSMKKRVLSLLIAVVFLSLTGVFPSGLIETKVSA). The active-site Nucleophile is aspartate 201. Active-site residues include histidine 516 and aspartate 546. The active-site Proton donor is the glutamate 555. One can recognise a Dockerin domain in the interval 579–649 (NEVLYGDVND…LIRVIEKLPI (71 aa)).

It belongs to the glycosyl hydrolase 9 (cellulase E) family. The cofactor is Ca(2+).

It carries out the reaction Endohydrolysis of (1-&gt;4)-beta-D-glucosidic linkages in cellulose, lichenin and cereal beta-D-glucans.. In terms of biological role, this enzyme catalyzes the endohydrolysis of 1,4-beta-glucosidic linkages in cellulose, lichenin and cereal beta-D-glucans. This is Endoglucanase D (celD) from Acetivibrio thermocellus (strain ATCC 27405 / DSM 1237 / JCM 9322 / NBRC 103400 / NCIMB 10682 / NRRL B-4536 / VPI 7372) (Clostridium thermocellum).